The primary structure comprises 283 residues: MKILSIQSAVAYGHVGNSAAVFPLQRIGVEVLPVYTVNFSNHTGYGAWRGPLIAPDEVREVITGIEERRVLGSIDAVLSGYQGSEGIGDVIVDAVARVKAADPHAVYACDPVMGNAASGCFVAPAIPDLLRDRVVPVADLITPNQFELGYLTGSTPDTLESTLASVEAARAMGPSTVLVTSVERPDRPEGTIEMLAVDDTGAWIVQTPRLPMKANGSGDVTAALFTAHYVRTGEAETALRKTVSSVYDLLASTLESGERELRLVESQEFYANPREQFAVSRVG.

A substrate-binding site is contributed by Ser8. ATP is bound by residues Asp110 and Glu147. Asp219 contributes to the substrate binding site.

The protein belongs to the pyridoxine kinase family. PdxY subfamily. Homodimer. Mg(2+) serves as cofactor.

The enzyme catalyses pyridoxal + ATP = pyridoxal 5'-phosphate + ADP + H(+). Its pathway is cofactor metabolism; pyridoxal 5'-phosphate salvage; pyridoxal 5'-phosphate from pyridoxal: step 1/1. Functionally, pyridoxal kinase involved in the salvage pathway of pyridoxal 5'-phosphate (PLP). Catalyzes the phosphorylation of pyridoxal to PLP. The protein is Pyridoxal kinase PdxY of Leifsonia xyli subsp. xyli (strain CTCB07).